The sequence spans 424 residues: PtdIns3K complex I subunit atg38 (424 aa).

A coiled-coil region spans residues 50–78; it reads LIKRCANNQIEELMVRIRELRESLPNKQT. Positions 73–212 are required for interaction with atg8; it reads LPNKQTPISM…DPAYQNTNEQ (140 aa). The AIM signature appears at 178–181; sequence FLIV. The segment covering 268–284 has biased composition (basic and acidic residues); that stretch reads LSEEEMGRSHKREESFK. The interval 268-299 is disordered; that stretch reads LSEEEMGRSHKREESFKRAFGHASSSESSIGE. Residues 390–420 are a coiled coil; that stretch reads TVDSQLKIKQLETQIATLQKQLEQFQTSTLD.

It belongs to the ATG38 family. In terms of assembly, component of the autophagy-specific vps34 PI3-kinase complex I composed of vps15, atg6, pik3/vps34, atg14 and atg38. Interacts (via AIM motif) with atg8; the interaction is direct and leads to recruitment of the autophagy-specific vps34 PI3-kinase complex I to the phagophore assembly site.

The protein resides in the preautophagosomal structure membrane. Its subcellular location is the cytoplasm. It is found in the cytosol. Functionally, functions as a part of the autophagy-specific VPS34 PI3-kinase complex I that plays a role in autophagosome assembly. This complex is essential to recruit the atg8-phosphatidylinositol conjugate and the atg12-atg5 conjugate to the pre-autophagosomal structure. By binding to atg8 at the phagophore assembly site, atg38 helps establish a positive feedback loop for recruitment of phagophore assembly proteins, including atg8. The polypeptide is PtdIns3K complex I subunit atg38 (Schizosaccharomyces pombe (strain 972 / ATCC 24843) (Fission yeast)).